A 168-amino-acid chain; its full sequence is S-ribosylhomocysteine lyase (168 aa).

The Fe cation site is built by H54, H58, and C128.

It belongs to the LuxS family. As to quaternary structure, homodimer. Requires Fe cation as cofactor.

The enzyme catalyses S-(5-deoxy-D-ribos-5-yl)-L-homocysteine = (S)-4,5-dihydroxypentane-2,3-dione + L-homocysteine. In terms of biological role, involved in the synthesis of autoinducer 2 (AI-2) which is secreted by bacteria and is used to communicate both the cell density and the metabolic potential of the environment. The regulation of gene expression in response to changes in cell density is called quorum sensing. Catalyzes the transformation of S-ribosylhomocysteine (RHC) to homocysteine (HC) and 4,5-dihydroxy-2,3-pentadione (DPD). The polypeptide is S-ribosylhomocysteine lyase (Neisseria meningitidis serogroup C / serotype 2a (strain ATCC 700532 / DSM 15464 / FAM18)).